Reading from the N-terminus, the 473-residue chain is Double-stranded RNA-binding protein 7 (473 aa).

Residues 1-10 are compositionally biased toward pro residues; it reads MDMPPTPLPP. The interval 1-22 is disordered; the sequence is MDMPPTPLPPETANTSPAPNGA. DRBM domains follow at residues 33–102 and 118–185; these read VFKS…EIVK and LCKN…AIQG. Composition is skewed to basic and acidic residues over residues 286-307, 317-327, and 416-427; these read KRVE…ENQH, DEARVEQEPSR, and VDARVVKEESPR. Disordered stretches follow at residues 286 to 329 and 393 to 473; these read KRVE…SRDI and QLNE…MSEE. The segment covering 433–450 has biased composition (polar residues); the sequence is EATNMKETPKNSAVCNSP.

Its function is as follows. Binds double-stranded RNA. The protein is Double-stranded RNA-binding protein 7 (DRB7) of Oryza sativa subsp. japonica (Rice).